The chain runs to 103 residues: MKKIRIKLKSFDSGILHRSTKEIVMAAKRNGALVSGPIPLPTRVSRYTVNKSPHVDKKSREQFQLAVHKCLLELSSFNAHLLSTFTNFQLPAGVDISVEVRDE.

It belongs to the universal ribosomal protein uS10 family. As to quaternary structure, part of the 30S ribosomal subunit.

Involved in the binding of tRNA to the ribosomes. This chain is Small ribosomal subunit protein uS10, found in Neorickettsia sennetsu (strain ATCC VR-367 / Miyayama) (Ehrlichia sennetsu).